Consider the following 293-residue polypeptide: Lipoyl synthase (293 aa).

[4Fe-4S] cluster contacts are provided by Cys-47, Cys-52, Cys-58, Cys-73, Cys-77, Cys-80, and Ser-285. The Radical SAM core domain occupies Trp-59–Arg-274.

Belongs to the radical SAM superfamily. Lipoyl synthase family. Requires [4Fe-4S] cluster as cofactor.

Its subcellular location is the cytoplasm. The enzyme catalyses [[Fe-S] cluster scaffold protein carrying a second [4Fe-4S](2+) cluster] + N(6)-octanoyl-L-lysyl-[protein] + 2 oxidized [2Fe-2S]-[ferredoxin] + 2 S-adenosyl-L-methionine + 4 H(+) = [[Fe-S] cluster scaffold protein] + N(6)-[(R)-dihydrolipoyl]-L-lysyl-[protein] + 4 Fe(3+) + 2 hydrogen sulfide + 2 5'-deoxyadenosine + 2 L-methionine + 2 reduced [2Fe-2S]-[ferredoxin]. It functions in the pathway protein modification; protein lipoylation via endogenous pathway; protein N(6)-(lipoyl)lysine from octanoyl-[acyl-carrier-protein]: step 2/2. Functionally, catalyzes the radical-mediated insertion of two sulfur atoms into the C-6 and C-8 positions of the octanoyl moiety bound to the lipoyl domains of lipoate-dependent enzymes, thereby converting the octanoylated domains into lipoylated derivatives. The sequence is that of Lipoyl synthase from Christiangramia forsetii (strain DSM 17595 / CGMCC 1.15422 / KT0803) (Gramella forsetii).